Here is a 476-residue protein sequence, read N- to C-terminus: Bifunctional protein HldE (476 aa).

The segment at 1–319 (MKVSLPAFEK…EALALHHGES (319 aa)) is ribokinase. Residue 195 to 198 (NMSE) coordinates ATP. The active site involves aspartate 264. The interval 345-476 (MTNGCFDILH…AIIQNIMANQ (132 aa)) is cytidylyltransferase.

The protein in the N-terminal section; belongs to the carbohydrate kinase PfkB family. It in the C-terminal section; belongs to the cytidylyltransferase family. As to quaternary structure, homodimer.

The catalysed reaction is D-glycero-beta-D-manno-heptose 7-phosphate + ATP = D-glycero-beta-D-manno-heptose 1,7-bisphosphate + ADP + H(+). It catalyses the reaction D-glycero-beta-D-manno-heptose 1-phosphate + ATP + H(+) = ADP-D-glycero-beta-D-manno-heptose + diphosphate. It participates in nucleotide-sugar biosynthesis; ADP-L-glycero-beta-D-manno-heptose biosynthesis; ADP-L-glycero-beta-D-manno-heptose from D-glycero-beta-D-manno-heptose 7-phosphate: step 1/4. The protein operates within nucleotide-sugar biosynthesis; ADP-L-glycero-beta-D-manno-heptose biosynthesis; ADP-L-glycero-beta-D-manno-heptose from D-glycero-beta-D-manno-heptose 7-phosphate: step 3/4. Functionally, catalyzes the phosphorylation of D-glycero-D-manno-heptose 7-phosphate at the C-1 position to selectively form D-glycero-beta-D-manno-heptose-1,7-bisphosphate. Catalyzes the ADP transfer from ATP to D-glycero-beta-D-manno-heptose 1-phosphate, yielding ADP-D-glycero-beta-D-manno-heptose. In Shewanella putrefaciens (strain CN-32 / ATCC BAA-453), this protein is Bifunctional protein HldE.